An 854-amino-acid chain; its full sequence is Nucleolar MIF4G domain-containing protein 1 homolog (854 aa).

Disordered regions lie at residues 1–38 (MAKIKKKEAKAKPLTRKEQRKQKSEFKKQNKRLYFAGK), 55–105 (QSQL…DAEV), 120–161 (PLGK…KQRI), and 217–306 (RKWE…RDAE). Residues 15–28 (TRKEQRKQKSEFKK) show a composition bias toward basic and acidic residues. Positions 60–71 (KNKKKKRSKKPK) are enriched in basic residues. A compositionally biased stretch (acidic residues) spans 88–105 (IDSDDDESIDSDFSDAEV). Composition is skewed to basic and acidic residues over residues 135-156 (RQDEEAVRRKELRQQKELESKS) and 217-238 (RKWEEKQERKKKLKEQQEKEEA). Acidic residues predominate over residues 242-289 (SDEEEDKEDRDEPMDNFSEDDSGSEGEDDDEDLTGEEEQSEEDSEQEE). Residues 290–306 (NAPKIKEDIYGRKRDAE) are compositionally biased toward basic and acidic residues. The region spanning 352–553 (LKQCKGLLNR…DILNAVKNNN (202 aa)) is the MIF4G domain. An MI domain is found at 650–764 (AERRNIFCII…QLSVLKVVDF (115 aa)).

It belongs to the CWC22 family.

It localises to the nucleus. It is found in the nucleolus. The polypeptide is Nucleolar MIF4G domain-containing protein 1 homolog (Drosophila melanogaster (Fruit fly)).